Consider the following 396-residue polypeptide: MSKYKRIFTIVIDSLGIGAMNDSEKYGDVNVDTLGHIAESVDTFNIPNLQKMGIANLHPIKHVAPVENPIGYQAKMAEASVGKDTMTGHWEMMGLHITKPFKTFTDTGFPQELLDELTARTGHKIVGNKSASGTEILDELGEHQIATGDMIVYTSADSVLQICGQEETFGLEELYRCCEIARELTLKDEWKVGRIIARPYLGTKKGEFKRTSNRHDYALKPYGRTVLNELKDNNFDVISVGKIKDIFDGEGITEGNKSKSSVHGMEQTLEIMDRDFTGFCFVNLVDFDALWGHRRNPQGYAEELEKFDVNLGKVLEKLHEDDLLIITADHGNDPTYTGTDHTREYVPFLAYSPSMKGHGQLETPKTFATIGATIADNFGLKMPEGTIGESVLNKLV.

Asp13, Asp288, His293, Asp329, His330, and His341 together coordinate Mn(2+).

Belongs to the phosphopentomutase family. Mn(2+) is required as a cofactor.

It localises to the cytoplasm. It carries out the reaction 2-deoxy-alpha-D-ribose 1-phosphate = 2-deoxy-D-ribose 5-phosphate. The catalysed reaction is alpha-D-ribose 1-phosphate = D-ribose 5-phosphate. It participates in carbohydrate degradation; 2-deoxy-D-ribose 1-phosphate degradation; D-glyceraldehyde 3-phosphate and acetaldehyde from 2-deoxy-alpha-D-ribose 1-phosphate: step 1/2. In terms of biological role, isomerase that catalyzes the conversion of deoxy-ribose 1-phosphate (dRib-1-P) and ribose 1-phosphate (Rib-1-P) to deoxy-ribose 5-phosphate (dRib-5-P) and ribose 5-phosphate (Rib-5-P), respectively. The polypeptide is Phosphopentomutase (Clostridium perfringens (strain ATCC 13124 / DSM 756 / JCM 1290 / NCIMB 6125 / NCTC 8237 / Type A)).